A 514-amino-acid chain; its full sequence is Putative transposase y4uI (514 aa).

Residues 11–93 form the HTH IS408-type domain; it reads VREILKLRLD…PDWSAVAREL (83 aa). The 190-residue stretch at 128–317 folds into the Integrase catalytic domain; that stretch reads HGRLPLVMRQ…TRRALFDELD (190 aa).

It belongs to the transposase IS21/IS408/IS1162 family.

The polypeptide is Putative transposase y4uI (Sinorhizobium fredii (strain NBRC 101917 / NGR234)).